Consider the following 339-residue polypeptide: Heat-inducible transcription repressor HrcA (339 aa).

The protein belongs to the HrcA family.

Its function is as follows. Negative regulator of class I heat shock genes (grpE-dnaK-dnaJ and groELS operons). Prevents heat-shock induction of these operons. The chain is Heat-inducible transcription repressor HrcA from Clostridium perfringens (strain SM101 / Type A).